Consider the following 228-residue polypeptide: Probable calcium-binding protein CML48 (228 aa).

EF-hand domains are found at residues 52 to 87 and 121 to 156; these read ETHP…SGYD and NCLA…LGCV. Asp-65, Asn-67, Ser-69, and Glu-76 together coordinate Ca(2+).

In terms of biological role, potential calcium sensor. The polypeptide is Probable calcium-binding protein CML48 (CML48) (Arabidopsis thaliana (Mouse-ear cress)).